We begin with the raw amino-acid sequence, 428 residues long: GTPase Obg (428 aa).

The 158-residue stretch at 1-158 folds into the Obg domain; it reads MFVDQVKIYV…RDVILELKVL (158 aa). Residues 159 to 329 enclose the OBG-type G domain; the sequence is ADVGLVGFPS…LLFEVANLIE (171 aa). GTP is bound by residues 165-172, 190-194, 212-215, 282-285, and 310-312; these read GFPSVGKS, FTTIV, DLPG, NKMD, and SAV. Residues serine 172 and threonine 192 each contribute to the Mg(2+) site. Residues 350 to 428 form the OCT domain; it reads KFETEGVKFD…ILEYEFEFID (79 aa).

It belongs to the TRAFAC class OBG-HflX-like GTPase superfamily. OBG GTPase family. In terms of assembly, monomer. Requires Mg(2+) as cofactor.

It is found in the cytoplasm. In terms of biological role, an essential GTPase which binds GTP, GDP and possibly (p)ppGpp with moderate affinity, with high nucleotide exchange rates and a fairly low GTP hydrolysis rate. Plays a role in control of the cell cycle, stress response, ribosome biogenesis and in those bacteria that undergo differentiation, in morphogenesis control. The protein is GTPase Obg of Bacillus cereus (strain AH820).